Reading from the N-terminus, the 1687-residue chain is PH domain leucine-rich repeat-containing protein phosphatase 1 (1687 aa).

M1 is modified (N-acetylmethionine). 2 disordered regions span residues 1 to 96 (MEPA…GGGA) and 230 to 406 (AAAP…AAPD). Residues 78-96 (APQPAAGGAAPVPAAGGGA) are compositionally biased toward low complexity. S286 bears the Phosphoserine mark. Over residues 314 to 326 (DTESFSLSPSAES) the composition is skewed to polar residues. At S372 the chain carries Phosphoserine. The PH domain maps to 492-592 (RIQLSGMYNV…WLRQVSKVAS (101 aa)). 21 LRR repeats span residues 594–615 (RISS…LFYS), 617–638 (DLTH…PAAR), 648–669 (KLKS…VCSI), 671–692 (TLAE…VGDM), 694–715 (NLQT…LESM), 717–739 (QLSY…EKLT), 740–760 (AVDK…QALR), 764–785 (HIKH…EVDF), 788–809 (HVTQ…IFNN), 829–850 (FLKA…PVPN), 851–872 (YLSY…VCES), 874–895 (KLEV…LFCN), 897–918 (SLRK…LERT), 919–940 (SVEV…LLMK), 943–964 (SLRF…TLSE), 969–989 (ILQE…PLLT), 993–1014 (RLKI…KMAK), 1017–1038 (ELEE…IMNC), 1040–1061 (RMHT…MQLP), 1062–1083 (EVKC…ENLP), and 1085–1106 (KLQE…SLEL). A PPM-type phosphatase domain is found at 1131 to 1378 (SHGYTEASGV…DSISAVVVQL (248 aa)). Mn(2+) contacts are provided by D1166, G1167, K1330, and D1369. 2 disordered regions span residues 1414–1465 (DRPS…SSPA) and 1604–1687 (PGGY…DTPL). Over residues 1424 to 1445 (SSSSGMASEISSELSTSEMSSE) the composition is skewed to low complexity. A compositionally biased stretch (pro residues) spans 1649 to 1669 (LPPPPQPPQPQPQPQPQPQPQ). Residues 1685 to 1687 (TPL) carry the PDZ-binding motif.

In terms of assembly, interacts with the nucleotide free form of K-Ras (KRAS) via its LRR repeats. Interacts with AKT2, AKT3 and PRKCB. Interacts with WDR48 and USP12. Requires Mn(2+) as cofactor. In terms of tissue distribution, isoforms 1 and 2 are expressed in the retina.

The protein localises to the cytoplasm. The protein resides in the membrane. Its subcellular location is the nucleus. The enzyme catalyses O-phospho-L-seryl-[protein] + H2O = L-seryl-[protein] + phosphate. It carries out the reaction O-phospho-L-threonyl-[protein] + H2O = L-threonyl-[protein] + phosphate. Its activity is regulated as follows. Insensitive to okadaic acid. Deubiquitination by WDR48-USP12 complex positively regulates PHLPP1 stability. Protein phosphatase involved in regulation of Akt and PKC signaling. Mediates dephosphorylation in the C-terminal domain hydrophobic motif of members of the AGC Ser/Thr protein kinase family; specifically acts on 'Ser-473' of AKT2 and AKT3, 'Ser-660' of PRKCB and 'Ser-657' of PRKCA. Isoform 2 seems to have a major role in regulating Akt signaling in hippocampal neurons. Akt regulates the balance between cell survival and apoptosis through a cascade that primarily alters the function of transcription factors that regulate pro- and antiapoptotic genes. Dephosphorylation of 'Ser-473' of Akt triggers apoptosis and suppression of tumor growth. Dephosphorylation of PRKCA and PRKCB leads to their destabilization and degradation. Dephosphorylates STK4 on 'Thr-387' leading to STK4 activation and apoptosis. Dephosphorylates RPS6KB1 and is involved in regulation of cap-dependent translation. Inhibits cancer cell proliferation and may act as a tumor suppressor. Dephosphorylates RAF1 inhibiting its kinase activity. May act as a negative regulator of K-Ras signaling in membrane rafts. Involved in the hippocampus-dependent long-term memory formation. Involved in circadian control by regulating the consolidation of circadian periodicity after resetting. Involved in development and function of regulatory T-cells. The chain is PH domain leucine-rich repeat-containing protein phosphatase 1 (Phlpp1) from Mus musculus (Mouse).